We begin with the raw amino-acid sequence, 1481 residues long: Cystic fibrosis transmembrane conductance regulator (1481 aa).

At 1-77 the chain is on the cytoplasmic side; that stretch reads MQRSPLEKAS…KLINALRRCF (77 aa). A helical transmembrane segment spans residues 78 to 98; that stretch reads FWRFTFYGILLYLGEVTKAVQ. Residues 81-365 form the ABC transmembrane type-1 1 domain; sequence FTFYGILLYL…WAVQTWYDSL (285 aa). Over 99 to 122 the chain is Extracellular; the sequence is PLLLGRIIASYDPDNKTERSIAIY. A helical membrane pass occupies residues 123 to 146; it reads LGIGLCLLFIVRTLLLHPAIFGLH. Residues 147–195 lie on the Cytoplasmic side of the membrane; that stretch reads HIGMQMRIAMFSLIYKKTLKLSSRVLDKISIGQLVSLLSNNLNKFDEGL. The helical transmembrane segment at 196–216 threads the bilayer; it reads ALAHFVWIAPLQVALLMGLIW. The Extracellular portion of the chain corresponds to 217-222; it reads ELLQAS. A helical transmembrane segment spans residues 223-243; it reads AFCGLGFLIVLALFQAGLGRM. Residues 244–298 lie on the Cytoplasmic side of the membrane; the sequence is MMKYRDQRAGKINERLVITSEMIENIQSVKAYCWEEAMEKIIENLRQTELKLTRK. A helical membrane pass occupies residues 299 to 319; sequence AAYVRYFNSSAFFFSGFFVVF. The Extracellular portion of the chain corresponds to 320 to 339; that stretch reads LSVLPYALIKGIVLRKIFTT. Residues 340–358 traverse the membrane as a helical segment; sequence ISFCIVLRMAVTRQFPWAV. At 359 to 858 the chain is on the cytoplasmic side; sequence QTWYDSLGAI…YLRYITLHKS (500 aa). ATP contacts are provided by residues W401, S434, 458 to 465, and Q493; that span reads GSTGAGKT. Positions 423 to 646 constitute an ABC transporter 1 domain; that stretch reads NGDDNLFFSN…RPDFSSKLMG (224 aa). Residue C524 is the site of S-palmitoyl cysteine attachment. A phosphoserine mark is found at S549 and S660. The interval 654–831 is disordered R region; it reads SSERRNSILT…EEINEEDLKE (178 aa). Phosphoserine; by PKA is present on S670. At S686 the chain carries Phosphoserine. Residue K688 forms a Glycyl lysine isopeptide (Lys-Gly) (interchain with G-Cter in ubiquitin) linkage. Phosphoserine is present on residues S700 and S712. T717 bears the Phosphothreonine mark. A phosphoserine mark is found at S737, S753, S768, S790, S795, and S813. The helical transmembrane segment at 859 to 879 threads the bilayer; the sequence is LIFVLIWCLVIFLAEVAASLV. The 297-residue stretch at 859-1155 folds into the ABC transmembrane type-1 2 domain; the sequence is LIFVLIWCLV…AVNSSIDVDS (297 aa). Topologically, residues 880–918 are extracellular; it reads VLWLLGNTPFQDKGNSTYSRNNSYAVIITNTSSYYVFYI. 3 N-linked (GlcNAc...) asparagine glycosylation sites follow: N894, N900, and N909. A discontinuously helical membrane pass occupies residues 919-939; the sequence is YVGVADTLLALGFFRGLPLVH. Topologically, residues 940–990 are cytoplasmic; it reads TLITVSKMLHHKMLHSVLQAPMSTLNTLKAGGILNRFSKDIAILDDLLPLT. Residues 991–1011 traverse the membrane as a helical segment; that stretch reads IFDFIQLLLIVIGAIAVVSVL. At 1012–1013 the chain is on the extracellular side; it reads QP. Residues 1014 to 1034 form a helical membrane-spanning segment; that stretch reads YIFLATVPVIAAFILLRAYFL. The Cytoplasmic segment spans residues 1035–1095; sequence QTSQQLKQLE…TANWFLYLST (61 aa). A helical transmembrane segment spans residues 1096 to 1116; sequence LRWFQMRIEMIFVIFFIAVTF. Residues 1117–1130 are Extracellular-facing; sequence ISILTTGEGEGTVG. Residues 1131 to 1151 traverse the membrane as a helical segment; sequence IILTLAMNIMSTLQWAVNSSI. The Cytoplasmic segment spans residues 1152–1481; it reads DVDSLMRSVS…TEEEVQETRL (330 aa). The 234-residue stretch at 1211–1444 folds into the ABC transporter 2 domain; the sequence is MTIKDLTAKY…KSLFRQAISH (234 aa). ATP is bound by residues Y1220 and 1245 to 1252; that span reads GRTGSGKS. Residues 1387-1481 are interaction with GORASP2; that stretch reads RALKQAFADC…TEEEVQETRL (95 aa). Residue C1396 is the site of S-palmitoyl cysteine attachment. Phosphoserine occurs at positions 1445 and 1457. The interval 1453–1481 is disordered; that stretch reads HRNSSKYKSQPQIASLKEETEEEVQETRL. A compositionally biased stretch (acidic residues) spans 1471–1481; sequence ETEEEVQETRL. Positions 1479 to 1481 match the PDZ-binding motif; it reads TRL.

It belongs to the ABC transporter superfamily. ABCC family. CFTR transporter (TC 3.A.1.202) subfamily. As to quaternary structure, monomer; does not require oligomerization for channel activity. May form oligomers in the membrane. Interacts with SLC26A3, SLC26A6 and NHERF1. Interacts with SHANK2. Interacts with MYO6. Interacts (via C-terminus) with GOPC (via PDZ domain); this promotes CFTR internalization and thereby decreases channel activity. Interacts with SLC4A7 through NHERF1. Found in a complex with MYO5B and RAB11A. Interacts with ANO1. Interacts with SLC26A8. Interacts with AHCYL1; the interaction increases CFTR activity. Interacts with CSE1L. The core-glycosylated form interacts with GORASP2 (via PDZ GRASP-type 1 domain) in respone to ER stress. Interacts with MARCHF2; the interaction leads to CFTR ubiqtuitination and degradation. Interacts with ADGRG2. Post-translationally, N-glycosylated. In terms of processing, phosphorylated; cAMP treatment promotes phosphorylation and activates the channel. Dephosphorylation decreases the ATPase activity (in vitro). Phosphorylation at PKA sites activates the channel. Phosphorylation at PKC sites enhances the response to phosphorylation by PKA. Phosphorylated by AMPK; this inhibits channel activity. Ubiquitinated, leading to its degradation in the lysosome. Deubiquitination by USP10 in early endosomes enhances its endocytic recycling to the cell membrane. Ubiquitinated by RNF185 during ER stress. Ubiquitinated by MARCHF2.

Its subcellular location is the apical cell membrane. It localises to the early endosome membrane. It is found in the cell membrane. The protein resides in the recycling endosome membrane. The protein localises to the endoplasmic reticulum membrane. Its subcellular location is the nucleus. The catalysed reaction is ATP + H2O + closed Cl(-) channel = ADP + phosphate + open Cl(-) channel.. It catalyses the reaction chloride(in) = chloride(out). It carries out the reaction hydrogencarbonate(in) = hydrogencarbonate(out). The enzyme catalyses ATP + H2O = ADP + phosphate + H(+). Its function is as follows. Epithelial ion channel that plays an important role in the regulation of epithelial ion and water transport and fluid homeostasis. Mediates the transport of chloride ions across the cell membrane. Possesses an intrinsic ATPase activity and utilizes ATP to gate its channel; the passive flow of anions through the channel is gated by cycles of ATP binding and hydrolysis by the ATP-binding domains. The ion channel is also permeable to HCO(3)(-); selectivity depends on the extracellular chloride concentration. Exerts its function also by modulating the activity of other ion channels and transporters. Contributes to the regulation of the pH and the ion content of the epithelial fluid layer. Modulates the activity of the epithelial sodium channel (ENaC) complex, in part by regulating the cell surface expression of the ENaC complex. May regulate bicarbonate secretion and salvage in epithelial cells by regulating the transporter SLC4A7. Can inhibit the chloride channel activity of ANO1. Plays a role in the chloride and bicarbonate homeostasis during sperm epididymal maturation and capacitation. The sequence is that of Cystic fibrosis transmembrane conductance regulator from Aotus nancymaae (Ma's night monkey).